Consider the following 62-residue polypeptide: Large ribosomal subunit protein uL15 (62 aa).

Belongs to the universal ribosomal protein uL15 family.

This Candida albicans (Yeast) protein is Large ribosomal subunit protein uL15 (RPL28).